The primary structure comprises 459 residues: Limonoid 7-O-acetyltransferse (459 aa).

Residues H167 and D391 each act as proton acceptor in the active site.

This sequence belongs to the plant acyltransferase family. As to quaternary structure, monomer. As to expression, expressed in maturing fruits and in juice vesicles.

It catalyses the reaction (1S)-1-acetoxy-luvungin A + acetyl-CoA = (1S)-1,7-diacetoxy-luvungin A + CoA. It participates in secondary metabolite biosynthesis; terpenoid biosynthesis. Acetyltransferase involved in the biosynthesis of limonoids triterpene natural products such as limonin, a compound with insecticidal activity responsible for the bitter taste in citrus. Catalyzes the formation of (1S)-1,7-diacetoxy-luvungin A from (1S)-1-acetoxy-luvungin A. The sequence is that of Limonoid 7-O-acetyltransferse from Citrus sinensis (Sweet orange).